Consider the following 181-residue polypeptide: Putative manganese efflux pump MntP (181 aa).

A run of 6 helical transmembrane segments spans residues 3–23, 42–62, 63–83, 101–121, 124–144, and 160–180; these read LIFLSIALAMDSVAISMANGA, IFQAFMPVIGYFLGLAFVGFI, SYIDHYVAFAILLFLGIKMIK, LMLGAFATSLDALAVGITFSF, INIAIAAFVIGLVCFVLCVIA, and LVLGGVILILIGCKIIITHLI.

This sequence belongs to the MntP (TC 9.B.29) family.

The protein localises to the cell inner membrane. Its function is as follows. Probably functions as a manganese efflux pump. The chain is Putative manganese efflux pump MntP from Campylobacter fetus subsp. fetus (strain 82-40).